The following is a 336-amino-acid chain: Ferredoxin--NADP reductase 1 (336 aa).

FAD is bound by residues Glu-37, Lys-45, Phe-50, Val-90, Leu-125, Asp-287, and Thr-328.

This sequence belongs to the ferredoxin--NADP reductase type 2 family. As to quaternary structure, homodimer. Requires FAD as cofactor.

The enzyme catalyses 2 reduced [2Fe-2S]-[ferredoxin] + NADP(+) + H(+) = 2 oxidized [2Fe-2S]-[ferredoxin] + NADPH. This chain is Ferredoxin--NADP reductase 1 (ycgT), found in Bacillus subtilis (strain 168).